The primary structure comprises 230 residues: Sugar fermentation stimulation protein homolog (230 aa).

Belongs to the SfsA family.

The sequence is that of Sugar fermentation stimulation protein homolog from Clostridium botulinum (strain Loch Maree / Type A3).